The sequence spans 338 residues: Putative ankyrin repeat protein CBU_0781 (338 aa).

Residues 1–31 (MSRRETPTSTISSTPTGTRTPRRRLSRKGHP) are disordered. The span at 7-19 (PTSTISSTPTGTR) shows a compositional bias: low complexity. Over residues 20-31 (TPRRRLSRKGHP) the composition is skewed to basic residues. ANK repeat units lie at residues 92–124 (QGDT…IVNK) and 125–157 (LGET…IKYK). The stretch at 197–242 (SQIMASDKEIDEIIRNARNLQIIKKEKREAEERARTKKSKQITLQR) forms a coiled coil. A disordered region spans residues 319 to 338 (KKEDTTLSRNNSLSCLSSPR). Low complexity predominate over residues 325 to 338 (LSRNNSLSCLSSPR).

The sequence is that of Putative ankyrin repeat protein CBU_0781 from Coxiella burnetii (strain RSA 493 / Nine Mile phase I).